A 368-amino-acid polypeptide reads, in one-letter code: NAD(P)H-quinone oxidoreductase subunit 1, chloroplastic (368 aa).

Transmembrane regions (helical) follow at residues R11–I31, I33–E53, W98–I118, I131–G151, L177–V197, F205–L225, F255–I275, V305–I325, and F348–L368.

Belongs to the complex I subunit 1 family. NDH is composed of at least 16 different subunits, 5 of which are encoded in the nucleus.

The protein localises to the plastid. It is found in the chloroplast thylakoid membrane. It carries out the reaction a plastoquinone + NADH + (n+1) H(+)(in) = a plastoquinol + NAD(+) + n H(+)(out). The catalysed reaction is a plastoquinone + NADPH + (n+1) H(+)(in) = a plastoquinol + NADP(+) + n H(+)(out). In terms of biological role, NDH shuttles electrons from NAD(P)H:plastoquinone, via FMN and iron-sulfur (Fe-S) centers, to quinones in the photosynthetic chain and possibly in a chloroplast respiratory chain. The immediate electron acceptor for the enzyme in this species is believed to be plastoquinone. Couples the redox reaction to proton translocation, and thus conserves the redox energy in a proton gradient. The polypeptide is NAD(P)H-quinone oxidoreductase subunit 1, chloroplastic (Cycas taitungensis (Prince sago)).